The sequence spans 220 residues: Vesicle-associated protein 2-1 (220 aa).

At methionine 1 the chain carries N-acetylmethionine. The Cytoplasmic segment spans residues 1–196; that stretch reads MTGVGENQLI…RNSGNGLSLK (196 aa). The residue at position 2 (threonine 2) is an N-acetylthreonine; in Vesicle-associated protein 2-1, N-terminally processed. The region spanning 9–129 is the MSP domain; it reads LISIQPDELK…TECKLKVSYI (121 aa). Positions 133–154 are disordered; it reads TTQRSSESGATNGDGQSSETIS. Positions 153 to 188 form a coiled coil; the sequence is ISTIQRLKEERDAAVKQTQQLQHELETVRRRRNQRN. A helical; Anchor for type IV membrane protein transmembrane segment spans residues 197 to 217; sequence LAAMVGLIGLIIGFILKLTLA.

It belongs to the VAMP-associated protein (VAP) (TC 9.B.17) family.

Its subcellular location is the endoplasmic reticulum membrane. In terms of biological role, may play a role in vesicle trafficking. The polypeptide is Vesicle-associated protein 2-1 (PVA21) (Arabidopsis thaliana (Mouse-ear cress)).